The chain runs to 286 residues: ATP synthase gamma chain (286 aa).

Belongs to the ATPase gamma chain family. F-type ATPases have 2 components, CF(1) - the catalytic core - and CF(0) - the membrane proton channel. CF(1) has five subunits: alpha(3), beta(3), gamma(1), delta(1), epsilon(1). CF(0) has three main subunits: a, b and c.

The protein resides in the cell inner membrane. Its function is as follows. Produces ATP from ADP in the presence of a proton gradient across the membrane. The gamma chain is believed to be important in regulating ATPase activity and the flow of protons through the CF(0) complex. This chain is ATP synthase gamma chain, found in Shewanella baltica (strain OS223).